A 388-amino-acid polypeptide reads, in one-letter code: Xylose isomerase (388 aa).

Active-site residues include His54 and Asp57. Positions 181, 217, 220, 245, 255, 257, and 287 each coordinate Mg(2+).

The protein belongs to the xylose isomerase family. In terms of assembly, homotetramer. Mg(2+) is required as a cofactor.

The protein localises to the cytoplasm. It catalyses the reaction alpha-D-xylose = alpha-D-xylulofuranose. In terms of biological role, involved in D-xylose catabolism. The sequence is that of Xylose isomerase (xylA) from Streptomyces murinus.